Here is a 493-residue protein sequence, read N- to C-terminus: Probable polyol transporter 6 (493 aa).

Helical transmembrane passes span S25–I45, V54–A74, Y85–P105, T116–A136, G142–V162, L177–P197, V275–L295, L313–L333, L343–T363, L372–I392, G414–L434, and G444–L464.

This sequence belongs to the major facilitator superfamily. Sugar transporter (TC 2.A.1.1) family.

The protein resides in the membrane. Its function is as follows. Plasma membrane sugar-proton symporter. The chain is Probable polyol transporter 6 (PLT6) from Arabidopsis thaliana (Mouse-ear cress).